Consider the following 368-residue polypeptide: N-acetylneuraminate epimerase (368 aa).

The first 19 residues, 1–19, serve as a signal peptide directing secretion; sequence MNKTITALAIMMASFAANA. Kelch repeat units lie at residues 40-84, 86-137, 139-173, 174-219, 222-265, 287-336, and 338-367; these read TVYI…AFID, NLYV…FVHN, KAYV…KINA, HYFD…VNKG, TWLI…VAGG, ENYQ…PWNN, and LLII…VTVQ. Glutamate 228 acts as the Proton acceptor in catalysis.

This sequence belongs to the NanM family. Homodimer.

It is found in the periplasm. The enzyme catalyses N-acetyl-alpha-neuraminate = N-acetyl-beta-neuraminate. Functionally, converts alpha-N-acetylneuranimic acid (Neu5Ac) to the beta-anomer, accelerating the equilibrium between the alpha- and beta-anomers. Probably facilitates sialidase-negative bacteria to compete successfully for limited amounts of extracellular Neu5Ac, which is likely taken up in the beta-anomer. In addition, the rapid removal of sialic acid from solution might be advantageous to the bacterium to damp down host responses. In Escherichia coli O9:H4 (strain HS), this protein is N-acetylneuraminate epimerase.